The following is a 362-amino-acid chain: MATPSKKRCGVLGATGAVGTRFILLLSQHPLLELVAVGASDRSSGKKYRDAVRWKQSAPMPAKVADLTVRCCDPAEFSDCDIIFSGLDPDAAGEIEMAFLKANFAVFSNAKNYRLDPMVPLVVPLVNAGHIDVIPAQRKHFGLDKGMLVCNSNCAVVGLVVPAKALIQKFGPIESVSMVTMQAVSGAGYPGVSSMDIFDNIVPYIPGEEGKISSEARKILGDLNSDLAGFSDQKPLQISVACNRVPVLDGHTVCASLRFVNRPPPTASQVREALREYKPEVQTLGCPSAPKMSIHVMDEVDRPQPRLDRETEGGYACTVGRIREDDSDVFDIQFVALSHNTVLGASGSSILNAESAILKGFV.

NADP(+) contacts are provided by T15, G16, A17, V18, S40, S43, L87, and D88. C154 (acyl-thioester intermediate) is an active-site residue. G186 contributes to the NADP(+) binding site. H251 acts as the Proton acceptor in catalysis. Residue N340 coordinates NADP(+).

This sequence belongs to the aspartate-semialdehyde dehydrogenase family. As to quaternary structure, homotetramer; dimer of dimers.

It localises to the cytoplasm. It is found in the cytosol. The protein resides in the nucleus. The enzyme catalyses L-aspartate 4-semialdehyde + phosphate + NADP(+) = 4-phospho-L-aspartate + NADPH + H(+). The protein operates within amino-acid biosynthesis; L-methionine biosynthesis via de novo pathway; L-homoserine from L-aspartate: step 2/3. Its pathway is amino-acid biosynthesis; L-threonine biosynthesis; L-threonine from L-aspartate: step 2/5. Functionally, catalyzes the NADPH-dependent formation of L-aspartate 4-semialdehyde (L-ASA) by the reductive dephosphorylation of 4-phospho-L-aspartate. Mediates the second step in the biosynthesis of amino acids that derive from aspartate (the aspartate family of amino acids), including methioinine and threonine, the latter of which is a precursor to isoleucine. This Trichophyton rubrum (strain ATCC MYA-4607 / CBS 118892) (Athlete's foot fungus) protein is Aspartate-semialdehyde dehydrogenase.